The sequence spans 651 residues: Acetyl-coenzyme A synthetase (651 aa).

CoA contacts are provided by residues 189 to 192, T311, and N335; that span reads RGGK. Residues 387–389, 411–416, D500, and R515 each bind ATP; these read GEP and DTWWQT. S523 is a binding site for CoA. R526 is an ATP binding site. Mg(2+)-binding residues include V537, H539, and V542. R584 is a binding site for CoA. The residue at position 609 (K609) is an N6-acetyllysine.

It belongs to the ATP-dependent AMP-binding enzyme family. It depends on Mg(2+) as a cofactor. Post-translationally, acetylated. Deacetylation by the SIR2-homolog deacetylase activates the enzyme.

The enzyme catalyses acetate + ATP + CoA = acetyl-CoA + AMP + diphosphate. Catalyzes the conversion of acetate into acetyl-CoA (AcCoA), an essential intermediate at the junction of anabolic and catabolic pathways. AcsA undergoes a two-step reaction. In the first half reaction, AcsA combines acetate with ATP to form acetyl-adenylate (AcAMP) intermediate. In the second half reaction, it can then transfer the acetyl group from AcAMP to the sulfhydryl group of CoA, forming the product AcCoA. The chain is Acetyl-coenzyme A synthetase from Allorhizobium ampelinum (strain ATCC BAA-846 / DSM 112012 / S4) (Agrobacterium vitis (strain S4)).